A 128-amino-acid polypeptide reads, in one-letter code: Large ribosomal subunit protein bL17 (128 aa).

Belongs to the bacterial ribosomal protein bL17 family. In terms of assembly, part of the 50S ribosomal subunit. Contacts protein L32.

The polypeptide is Large ribosomal subunit protein bL17 (Pseudomonas fluorescens (strain ATCC BAA-477 / NRRL B-23932 / Pf-5)).